A 213-amino-acid polypeptide reads, in one-letter code: uncharacterized protein (213 aa).

The CS domain occupies Ser-2–Val-91. Positions Gly-168 to Ser-213 are disordered. Positions Asp-176 to Glu-187 are enriched in acidic residues. The segment covering Val-188–Ser-213 has biased composition (basic and acidic residues).

Belongs to the p23/wos2 family.

This is an uncharacterized protein from Oryza sativa subsp. japonica (Rice).